Here is a 434-residue protein sequence, read N- to C-terminus: Protein ENHANCED PSEUDOMONAS SUSCEPTIBILITY 1 (434 aa).

Residue Asp376 is the Proton acceptor of the active site.

This sequence belongs to the plant acyltransferase family.

In terms of biological role, required for pathogen-induced salicylic acid (SA) accumulation and SA-mediated resistance to virulent and avirulent pathogens (e.g. P.syringae). The chain is Protein ENHANCED PSEUDOMONAS SUSCEPTIBILITY 1 from Arabidopsis thaliana (Mouse-ear cress).